Consider the following 256-residue polypeptide: Omega-amidase YafV (256 aa).

Residues 4–234 (LKITLLQQPL…ATRIDAELSM (231 aa)) enclose the CN hydrolase domain. Glu42 serves as the catalytic Proton acceptor. Residue Lys107 is part of the active site. Cys141 acts as the Nucleophile in catalysis.

The protein belongs to the carbon-nitrogen hydrolase superfamily. NIT1/NIT2 family.

It carries out the reaction a monoamide of a dicarboxylate + H2O = a dicarboxylate + NH4(+). Hydrolyzes alpha-ketoglutaramate (a-KGM) to alpha-ketoglutarate (alpha-KG) and ammonia (specific activity 6.65 umol/min/mg), has weak activity on L-glutamine, almost no activity on deaminated glutathione (dGSH) and none on glutathione. May function as a metabolite repair enzyme. This Escherichia coli (strain B / BL21-DE3) protein is Omega-amidase YafV (yafV).